Here is a 398-residue protein sequence, read N- to C-terminus: Acetate kinase 1 (398 aa).

A Mg(2+)-binding site is contributed by Asn9. Lys16 lines the ATP pocket. Arg89 contacts substrate. Catalysis depends on Asp146, which acts as the Proton donor/acceptor. ATP contacts are provided by residues 206–210 (HLGNG), 281–283 (DCR), and 329–333 (GIGEN). Residue Glu384 coordinates Mg(2+).

Belongs to the acetokinase family. In terms of assembly, homodimer. It depends on Mg(2+) as a cofactor. Mn(2+) serves as cofactor.

It is found in the cytoplasm. It carries out the reaction acetate + ATP = acetyl phosphate + ADP. Its pathway is metabolic intermediate biosynthesis; acetyl-CoA biosynthesis; acetyl-CoA from acetate: step 1/2. Its function is as follows. Catalyzes the formation of acetyl phosphate from acetate and ATP. Can also catalyze the reverse reaction. The polypeptide is Acetate kinase 1 (Vibrio cholerae serotype O1 (strain ATCC 39315 / El Tor Inaba N16961)).